A 209-amino-acid chain; its full sequence is Imidazoleglycerol-phosphate dehydratase (209 aa).

Belongs to the imidazoleglycerol-phosphate dehydratase family.

The protein resides in the cytoplasm. It carries out the reaction D-erythro-1-(imidazol-4-yl)glycerol 3-phosphate = 3-(imidazol-4-yl)-2-oxopropyl phosphate + H2O. It functions in the pathway amino-acid biosynthesis; L-histidine biosynthesis; L-histidine from 5-phospho-alpha-D-ribose 1-diphosphate: step 6/9. This is Imidazoleglycerol-phosphate dehydratase from Paracidovorax citrulli (strain AAC00-1) (Acidovorax citrulli).